A 359-amino-acid polypeptide reads, in one-letter code: 1-deoxy-D-xylulose 5-phosphate reductoisomerase (359 aa).

NADPH is bound by residues Thr7, Gly8, Ser9, Ile10, Ala31, Asn33, and Asn111. Lys112 provides a ligand contact to 1-deoxy-D-xylulose 5-phosphate. Residue Glu113 participates in NADPH binding. Asp131 serves as a coordination point for Mn(2+). 1-deoxy-D-xylulose 5-phosphate contacts are provided by Ser132, Glu133, Ser155, and His178. Mn(2+) is bound at residue Glu133. Gly184 is an NADPH binding site. Positions 191, 196, 197, and 200 each coordinate 1-deoxy-D-xylulose 5-phosphate. Position 200 (Glu200) interacts with Mn(2+).

It belongs to the DXR family. Mg(2+) serves as cofactor. The cofactor is Mn(2+).

The enzyme catalyses 2-C-methyl-D-erythritol 4-phosphate + NADP(+) = 1-deoxy-D-xylulose 5-phosphate + NADPH + H(+). It functions in the pathway isoprenoid biosynthesis; isopentenyl diphosphate biosynthesis via DXP pathway; isopentenyl diphosphate from 1-deoxy-D-xylulose 5-phosphate: step 1/6. Its function is as follows. Catalyzes the NADPH-dependent rearrangement and reduction of 1-deoxy-D-xylulose-5-phosphate (DXP) to 2-C-methyl-D-erythritol 4-phosphate (MEP). In Campylobacter hominis (strain ATCC BAA-381 / DSM 21671 / CCUG 45161 / LMG 19568 / NCTC 13146 / CH001A), this protein is 1-deoxy-D-xylulose 5-phosphate reductoisomerase.